Reading from the N-terminus, the 280-residue chain is Phosphonoacetaldehyde hydrolase (280 aa).

The active-site Nucleophile is the aspartate 23. Aspartate 23 and alanine 25 together coordinate Mg(2+). The Schiff-base intermediate with substrate role is filled by lysine 64. Aspartate 197 provides a ligand contact to Mg(2+).

Belongs to the HAD-like hydrolase superfamily. PhnX family. As to quaternary structure, homodimer. The cofactor is Mg(2+).

It catalyses the reaction phosphonoacetaldehyde + H2O = acetaldehyde + phosphate + H(+). Its function is as follows. Involved in phosphonate degradation. In Bordetella avium (strain 197N), this protein is Phosphonoacetaldehyde hydrolase.